The chain runs to 317 residues: Ribose-phosphate pyrophosphokinase (317 aa).

ATP contacts are provided by residues 43-45 and 102-103; these read DGE and RQ. 2 residues coordinate ADP: K106 and R110. H136 contributes to the Mg(2+) binding site. Residues Q141 and 149–150 contribute to the ADP site; that span reads DH. D175 is a Mg(2+) binding site. K198 is an active-site residue. D-ribose 5-phosphate is bound by residues R200, D224, and 228–232; that span reads DTAGT. 311 to 313 provides a ligand contact to ADP; that stretch reads SVS.

The protein belongs to the ribose-phosphate pyrophosphokinase family. Class I subfamily. As to quaternary structure, homohexamer; trimer of dimers. The cofactor is Mg(2+).

The protein resides in the cytoplasm. The catalysed reaction is D-ribose 5-phosphate + ATP = 5-phospho-alpha-D-ribose 1-diphosphate + AMP + H(+). The protein operates within metabolic intermediate biosynthesis; 5-phospho-alpha-D-ribose 1-diphosphate biosynthesis; 5-phospho-alpha-D-ribose 1-diphosphate from D-ribose 5-phosphate (route I): step 1/1. Its activity is regulated as follows. Activated by inorganic phosphate, and to a lesser extent by sulfate ions. In addition to form a complex with ATP, Mg(2+) also acts as a cofactor. Strongly inhibited by ADP through competitive binding at the activation site and at a specific allosteric site. Less strongly inhibited by alpha,beta-methylene ATP (mADP), AMP, GDP, GMP and UTP. Its function is as follows. Involved in the biosynthesis of the central metabolite phospho-alpha-D-ribosyl-1-pyrophosphate (PRPP) via the transfer of pyrophosphoryl group from ATP to 1-hydroxyl of ribose-5-phosphate (Rib-5-P). In Bacillus subtilis (strain 168), this protein is Ribose-phosphate pyrophosphokinase.